Here is a 20-residue protein sequence, read N- to C-terminus: Protein PR-L1 (20 aa).

The protein belongs to the BetVI family.

The sequence is that of Protein PR-L1 from Lupinus luteus (European yellow lupine).